A 951-amino-acid chain; its full sequence is Valine--tRNA ligase (951 aa).

Positions P42 to H52 match the 'HIGH' region motif. Residues K554 to S558 carry the 'KMSKS' region motif. K557 provides a ligand contact to ATP. Positions A880–Q944 form a coiled coil.

It belongs to the class-I aminoacyl-tRNA synthetase family. ValS type 1 subfamily. As to quaternary structure, monomer.

The protein resides in the cytoplasm. It carries out the reaction tRNA(Val) + L-valine + ATP = L-valyl-tRNA(Val) + AMP + diphosphate. Functionally, catalyzes the attachment of valine to tRNA(Val). As ValRS can inadvertently accommodate and process structurally similar amino acids such as threonine, to avoid such errors, it has a 'posttransfer' editing activity that hydrolyzes mischarged Thr-tRNA(Val) in a tRNA-dependent manner. This Shigella dysenteriae serotype 1 (strain Sd197) protein is Valine--tRNA ligase.